The following is a 207-amino-acid chain: LexA repressor (207 aa).

The segment at residues arginine 28 to lysine 48 is a DNA-binding region (H-T-H motif). Residues serine 124 and lysine 161 each act as for autocatalytic cleavage activity in the active site.

It belongs to the peptidase S24 family. Homodimer.

The catalysed reaction is Hydrolysis of Ala-|-Gly bond in repressor LexA.. Functionally, represses a number of genes involved in the response to DNA damage (SOS response), including recA and lexA. In the presence of single-stranded DNA, RecA interacts with LexA causing an autocatalytic cleavage which disrupts the DNA-binding part of LexA, leading to derepression of the SOS regulon and eventually DNA repair. This chain is LexA repressor, found in Aliivibrio salmonicida (strain LFI1238) (Vibrio salmonicida (strain LFI1238)).